We begin with the raw amino-acid sequence, 1012 residues long: Structural polyprotein (1012 aa).

Asp30 serves as a coordination point for a divalent metal cation. The Peptidase S50 domain maps to 513 to 755; it reads ADKGYEVVAN…AGRQYHLAMA (243 aa). Ser652 functions as the Nucleophile in the catalytic mechanism. Residue Lys692 is part of the active site. A disordered region spans residues 969 to 1012; sequence AMEMKHRNPRRALPKPKPKPNAPTQRPPGRLGRWIRTVSDEDLE. Residues 975–986 show a composition bias toward basic residues; sequence RNPRRALPKPKP. Residues 1003-1012 are interaction with VP1 protein; sequence IRTVSDEDLE.

In terms of assembly, homotrimer. A central divalent metal stabilizes the VP2 trimer. Interacts with host ITGA4/ITGB1. As to quaternary structure, homodimer. Interacts (via C-terminus) with VP1 in the cytoplasm. Interacts with VP2. In terms of processing, specific enzymatic cleavages yield mature proteins. The capsid assembly seems to be regulated by polyprotein processing. The protease VP4 cleaves itself off the polyprotein, thus releasing pre-VP2 and VP3 within the infected cell. During capsid assembly, the C-terminus of pre-VP2 is further processed by VP4, giving rise to VP2, the external capsid protein and three small peptides that all stay closely associated with the capsid.

The protein localises to the virion. The protein resides in the host cytoplasm. Its function is as follows. Capsid protein VP2 self assembles to form an icosahedral capsid with a T=13 symmetry, about 70 nm in diameter, and consisting of 260 VP2 trimers. The capsid encapsulates the genomic dsRNA. VP2 is also involved in attachment and entry into the host cell by interacting with host ITGA4/ITGB1. Functionally, the precursor of VP2 plays an important role in capsid assembly. First, pre-VP2 and VP2 oligomers assemble to form a procapsid. Then, the pre-VP2 intermediates may be processed into VP2 proteins by proteolytic cleavage mediated by VP4 to obtain the mature virion. The final capsid is composed of pentamers and hexamers but VP2 has a natural tendency to assemble into all-pentameric structures. Therefore pre-VP2 may be required to allow formation of the hexameric structures. In terms of biological role, protease VP4 is a serine protease that cleaves the polyprotein into its final products. Pre-VP2 is first partially cleaved, and may be completely processed by VP4 upon capsid maturation. Capsid protein VP3 plays a key role in virion assembly by providing a scaffold for the capsid made of VP2. May self-assemble to form a T=4-like icosahedral inner-capsid composed of at least 180 trimers. Plays a role in genomic RNA packaging by recruiting VP1 into the capsid and interacting with the dsRNA genome segments to form a ribonucleoprotein complex. Additionally, the interaction of the VP3 C-terminal tail with VP1 removes the inherent structural blockade of the polymerase active site. Thus, VP3 can also function as a transcriptional activator. Its function is as follows. Structural peptide 1 is a small peptide derived from pre-VP2 C-terminus. It destabilizes and perforates cell membranes, suggesting a role during entry. Functionally, structural peptide 2 is a small peptide derived from pVP2 C-terminus. It is not essential for the virus viability, but viral growth is affected when missing. In terms of biological role, structural peptide 3 is a small peptide derived from pVP2 C-terminus. It is not essential for the virus viability, but viral growth is affected when missing. Structural peptide 4 is a small peptide derived from pVP2 C-terminus. It is essential for the virus viability. The sequence is that of Structural polyprotein from Avian infectious bursal disease virus (strain Cu-1) (IBDV).